An 82-amino-acid polypeptide reads, in one-letter code: Putative membrane protein insertion efficiency factor (82 aa).

This sequence belongs to the UPF0161 family.

It is found in the cell inner membrane. Functionally, could be involved in insertion of integral membrane proteins into the membrane. This chain is Putative membrane protein insertion efficiency factor, found in Francisella tularensis subsp. holarctica (strain LVS).